Here is a 197-residue protein sequence, read N- to C-terminus: Phospholipid hydroperoxide glutathione peroxidase (197 aa).

Ser-40 is subject to Phosphoserine. Sec-73 is a catalytic residue. Position 73 (Sec-73) is a non-standard amino acid, selenocysteine.

Belongs to the glutathione peroxidase family. As to quaternary structure, monomer. Has a tendency to form higher mass oligomers. Interacts with FUNDC1; this interaction promotes GPX4 recruitment into mitochondria through TOM/TIM complex where it is degraded by mitophagy.

It localises to the mitochondrion. The protein localises to the cytoplasm. The enzyme catalyses a hydroperoxy polyunsaturated fatty acid + 2 glutathione = a hydroxy polyunsaturated fatty acid + glutathione disulfide + H2O. The catalysed reaction is 2 glutathione + H2O2 = glutathione disulfide + 2 H2O. It catalyses the reaction tert-butyl hydroperoxide + 2 glutathione = tert-butanol + glutathione disulfide + H2O. It carries out the reaction cumene hydroperoxide + 2 glutathione = 2-phenylpropan-2-ol + glutathione disulfide + H2O. The enzyme catalyses (9S)-hydroperoxy-(10E,12Z)-octadecadienoate + 2 glutathione = (9S)-hydroxy-(10E,12Z)-octadecadienoate + glutathione disulfide + H2O. The catalysed reaction is (13S)-hydroperoxy-(9Z,11E)-octadecadienoate + 2 glutathione = (13S)-hydroxy-(9Z,11E)-octadecadienoate + glutathione disulfide + H2O. It catalyses the reaction (5S)-hydroperoxy-(6E,8Z,11Z,14Z)-eicosatetraenoate + 2 glutathione = (5S)-hydroxy-(6E,8Z,11Z,14Z)-eicosatetraenoate + glutathione disulfide + H2O. It carries out the reaction (12R)-hydroperoxy-(5Z,8Z,10E,14Z)-eicosatetraenoate + 2 glutathione = (12R)-hydroxy-(5Z,8Z,10E,14Z)-eicosatetraenoate + glutathione disulfide + H2O. The enzyme catalyses (12S)-hydroperoxy-(5Z,8Z,10E,14Z)-eicosatetraenoate + 2 glutathione = (12S)-hydroxy-(5Z,8Z,10E,14Z)-eicosatetraenoate + glutathione disulfide + H2O. The catalysed reaction is (15S)-hydroperoxy-(5Z,8Z,11Z,13E)-eicosatetraenoate + 2 glutathione = (15S)-hydroxy-(5Z,8Z,11Z,13E)-eicosatetraenoate + glutathione disulfide + H2O. It catalyses the reaction (5S)-hydroperoxy-(6E,8Z,11Z,14Z,17Z)-eicosapentaenoate + 2 glutathione = (5S)-hydroxy-(6E,8Z,11Z,14Z,17Z)-eicosapentaenoate + glutathione disulfide + H2O. It carries out the reaction (12S)-hydroperoxy-(5Z,8Z,10E,14Z,17Z)-eicosapentaenoate + 2 glutathione = (12S)-hydroxy-(5Z,8Z,10E,14Z,17Z)-eicosapentaenoate + glutathione disulfide + H2O. The enzyme catalyses (15S)-hydroperoxy-(5Z,8Z,11Z,13E,17Z)-eicosapentaenoate + 2 glutathione = (15S)-hydroxy-(5Z,8Z,11Z,13E,17Z)-eicosapentaenoate + glutathione disulfide + H2O. The catalysed reaction is (15S)-hydroperoxy-(11Z,13E)-eicosadienoate + 2 glutathione = (15S)-hydroxy-(11Z,13E)-eicosadienoate + glutathione disulfide + H2O. It catalyses the reaction (17S)-hydroperoxy-(4Z,7Z,10Z,13Z,15E,19Z)-docosahexaenoate + 2 glutathione = (17S)-hydroxy-(4Z,7Z,10Z,13Z,15E,19Z)-docosahexaenoate + glutathione disulfide + H2O. It carries out the reaction a hydroperoxy-1,2-diacyl-glycero-3-phosphocholine + 2 glutathione = a hydroxy-1,2-diacyl-glycero-3-phosphocholine + glutathione disulfide + H2O. Essential antioxidant peroxidase that directly reduces phospholipid hydroperoxide even if they are incorporated in membranes and lipoproteins. Can also reduce fatty acid hydroperoxide, cholesterol hydroperoxide and thymine hydroperoxide. Plays a key role in protecting cells from oxidative damage by preventing membrane lipid peroxidation. Required to prevent cells from ferroptosis, a non-apoptotic cell death resulting from an iron-dependent accumulation of lipid reactive oxygen species. The presence of selenocysteine (Sec) versus Cys at the active site is essential for life: it provides resistance to overoxidation and prevents cells against ferroptosis. The presence of Sec at the active site is also essential for the survival of a specific type of parvalbumin-positive interneurons, thereby preventing against fatal epileptic seizures. May be required to protect cells from the toxicity of ingested lipid hydroperoxides. Required for normal sperm development and male fertility. Essential for maturation and survival of photoreceptor cells. Plays a role in a primary T-cell response to viral and parasitic infection by protecting T-cells from ferroptosis and by supporting T-cell expansion. Plays a role of glutathione peroxidase in platelets in the arachidonic acid metabolism. Reduces hydroperoxy ester lipids formed by a 15-lipoxygenase that may play a role as down-regulator of the cellular 15-lipoxygenase pathway. Can also reduce small soluble hydroperoxides such as H2O2, cumene hydroperoxide and tert-butyl hydroperoxide. In Sus scrofa (Pig), this protein is Phospholipid hydroperoxide glutathione peroxidase.